We begin with the raw amino-acid sequence, 677 residues long: Methionine--tRNA ligase (677 aa).

The 'HIGH' region signature appears at 15 to 25 (PYANGSIHLGH). 4 residues coordinate Zn(2+): Cys-146, Cys-149, Cys-159, and Cys-162. The 'KMSKS' region signature appears at 333-337 (KMSKS). ATP is bound at residue Lys-336. A tRNA-binding domain is found at 575-677 (DFAKVDLRVA…AGAKPGHQVK (103 aa)).

It belongs to the class-I aminoacyl-tRNA synthetase family. MetG type 1 subfamily. As to quaternary structure, homodimer. Requires Zn(2+) as cofactor.

Its subcellular location is the cytoplasm. The catalysed reaction is tRNA(Met) + L-methionine + ATP = L-methionyl-tRNA(Met) + AMP + diphosphate. Is required not only for elongation of protein synthesis but also for the initiation of all mRNA translation through initiator tRNA(fMet) aminoacylation. This Shigella boydii serotype 18 (strain CDC 3083-94 / BS512) protein is Methionine--tRNA ligase.